The chain runs to 364 residues: Dual-specificity RNA methyltransferase RlmN (364 aa).

The active-site Proton acceptor is the Glu91. Positions 97–333 (ESDRGTLCIS…VTVRKTRGDD (237 aa)) constitute a Radical SAM core domain. Cys104 and Cys338 are joined by a disulfide. Residues Cys111, Cys115, and Cys118 each contribute to the [4Fe-4S] cluster site. S-adenosyl-L-methionine contacts are provided by residues 164 to 165 (GE), Ser196, 218 to 220 (SLH), and Asn295. Residue Cys338 is the S-methylcysteine intermediate of the active site.

It belongs to the radical SAM superfamily. RlmN family. [4Fe-4S] cluster is required as a cofactor.

Its subcellular location is the cytoplasm. It carries out the reaction adenosine(2503) in 23S rRNA + 2 reduced [2Fe-2S]-[ferredoxin] + 2 S-adenosyl-L-methionine = 2-methyladenosine(2503) in 23S rRNA + 5'-deoxyadenosine + L-methionine + 2 oxidized [2Fe-2S]-[ferredoxin] + S-adenosyl-L-homocysteine. It catalyses the reaction adenosine(37) in tRNA + 2 reduced [2Fe-2S]-[ferredoxin] + 2 S-adenosyl-L-methionine = 2-methyladenosine(37) in tRNA + 5'-deoxyadenosine + L-methionine + 2 oxidized [2Fe-2S]-[ferredoxin] + S-adenosyl-L-homocysteine. Specifically methylates position 2 of adenine 2503 in 23S rRNA and position 2 of adenine 37 in tRNAs. m2A2503 modification seems to play a crucial role in the proofreading step occurring at the peptidyl transferase center and thus would serve to optimize ribosomal fidelity. This chain is Dual-specificity RNA methyltransferase RlmN, found in Neisseria meningitidis serogroup B (strain ATCC BAA-335 / MC58).